A 478-amino-acid polypeptide reads, in one-letter code: Chromosomal replication initiator protein DnaA (478 aa).

The interval 1 to 82 (MHTMNKTAES…ELGKNAKLLY (82 aa)) is domain I, interacts with DnaA modulators. Residues 82-140 (YKIKMENTYGNKLPFTEQLPSAHRSPVRTQEIDVPVQQKNPELRNPFIIPGIRNLKIES) are domain II. The segment at 141–358 (QLNANYSFDN…GAIISLIAQS (218 aa)) is domain III, AAA+ region. Residues Gly186, Gly188, Lys189, and Thr190 each coordinate ATP. A domain IV, binds dsDNA region spans residues 359-478 (SFNKKEVTLE…VDDINKKLSL (120 aa)).

It belongs to the DnaA family. Oligomerizes as a right-handed, spiral filament on DNA at oriC.

It localises to the cytoplasm. Functionally, plays an essential role in the initiation and regulation of chromosomal replication. ATP-DnaA binds to the origin of replication (oriC) to initiate formation of the DNA replication initiation complex once per cell cycle. Binds the DnaA box (a 9 base pair repeat at the origin) and separates the double-stranded (ds)DNA. Forms a right-handed helical filament on oriC DNA; dsDNA binds to the exterior of the filament while single-stranded (ss)DNA is stabiized in the filament's interior. The ATP-DnaA-oriC complex binds and stabilizes one strand of the AT-rich DNA unwinding element (DUE), permitting loading of DNA polymerase. After initiation quickly degrades to an ADP-DnaA complex that is not apt for DNA replication. Binds acidic phospholipids. The polypeptide is Chromosomal replication initiator protein DnaA (Flavobacterium psychrophilum (strain ATCC 49511 / DSM 21280 / CIP 103535 / JIP02/86)).